A 348-amino-acid polypeptide reads, in one-letter code: Glucokinase (348 aa).

14 to 19 is a binding site for ATP; that stretch reads GDVGGS. A disordered region spans residues 327–348; it reads SDPAPVAAPTHPRGGTAGDMHA.

It belongs to the bacterial glucokinase family.

Its subcellular location is the cytoplasm. It carries out the reaction D-glucose + ATP = D-glucose 6-phosphate + ADP + H(+). The protein is Glucokinase of Chromobacterium violaceum (strain ATCC 12472 / DSM 30191 / JCM 1249 / CCUG 213 / NBRC 12614 / NCIMB 9131 / NCTC 9757 / MK).